A 437-amino-acid polypeptide reads, in one-letter code: Enolase (437 aa).

Q162 provides a ligand contact to (2R)-2-phosphoglycerate. Residue E204 is the Proton donor of the active site. Mg(2+) is bound by residues D251, E297, and D324. Residues K349, R378, S379, and K400 each coordinate (2R)-2-phosphoglycerate. The active-site Proton acceptor is the K349.

This sequence belongs to the enolase family. Mg(2+) serves as cofactor.

The protein resides in the cytoplasm. It is found in the secreted. Its subcellular location is the cell surface. The enzyme catalyses (2R)-2-phosphoglycerate = phosphoenolpyruvate + H2O. Its pathway is carbohydrate degradation; glycolysis; pyruvate from D-glyceraldehyde 3-phosphate: step 4/5. Catalyzes the reversible conversion of 2-phosphoglycerate (2-PG) into phosphoenolpyruvate (PEP). It is essential for the degradation of carbohydrates via glycolysis. The polypeptide is Enolase (Prosthecochloris aestuarii (strain DSM 271 / SK 413)).